The chain runs to 781 residues: Sialidase (781 aa).

The first 24 residues, 1 to 24 (MRFKNVKKTALMLAMFGMATSSNA), serve as a signal peptide directing secretion. Residue Arg224 participates in substrate binding. The active-site Proton acceptor is Asp250. BNR repeat units follow at residues 263–274 (RTSRDGGITWDT) and 585–596 (IYSDDGGSNWQT). Glu619 is an active-site residue. Substrate is bound at residue Arg635. Residues 653–664 (FLSKDGGITWSL) form a BNR 3 repeat. Position 712 (Arg712) interacts with substrate. The BNR 4 repeat unit spans residues 718-729 (WFSFDEGVTWKG). Tyr740 acts as the Nucleophile in catalysis.

Belongs to the glycosyl hydrolase 33 family. Monomer. It depends on Ca(2+) as a cofactor.

It localises to the secreted. It carries out the reaction Hydrolysis of alpha-(2-&gt;3)-, alpha-(2-&gt;6)-, alpha-(2-&gt;8)- glycosidic linkages of terminal sialic acid residues in oligosaccharides, glycoproteins, glycolipids, colominic acid and synthetic substrates.. Cleaves the terminal sialic acid (N-acetyl neuraminic acid) from carbohydrate chains in glycoproteins providing free sialic acid which can be used as carbon and energy sources. Sialidases have been suggested to be pathogenic factors in microbial infections. Facilitates cholera toxin binding to host intestinal epithelial cells by converting cell surface polysialogangliosides to GM1 monogangliosides. This is Sialidase (nanH) from Vibrio cholerae serotype O1 (strain ATCC 39541 / Classical Ogawa 395 / O395).